We begin with the raw amino-acid sequence, 242 residues long: Ubiquinone biosynthesis O-methyltransferase (242 aa).

Residues arginine 44, glycine 64, aspartate 85, and methionine 129 each contribute to the S-adenosyl-L-methionine site.

It belongs to the methyltransferase superfamily. UbiG/COQ3 family.

It catalyses the reaction a 3-demethylubiquinol + S-adenosyl-L-methionine = a ubiquinol + S-adenosyl-L-homocysteine + H(+). The enzyme catalyses a 3-(all-trans-polyprenyl)benzene-1,2-diol + S-adenosyl-L-methionine = a 2-methoxy-6-(all-trans-polyprenyl)phenol + S-adenosyl-L-homocysteine + H(+). It functions in the pathway cofactor biosynthesis; ubiquinone biosynthesis. Functionally, O-methyltransferase that catalyzes the 2 O-methylation steps in the ubiquinone biosynthetic pathway. This chain is Ubiquinone biosynthesis O-methyltransferase, found in Klebsiella pneumoniae subsp. pneumoniae (strain ATCC 700721 / MGH 78578).